A 383-amino-acid polypeptide reads, in one-letter code: Caspase a (383 aa).

A propeptide spanning residues 1 to 142 (MAKSIKDHLQ…ETYEIKDKSV (142 aa)) is cleaved from the precursor. The 74-residue stretch at 8 to 81 (HLQDALSNIG…RGIKCNAVAE (74 aa)) folds into the Pyrin domain. Residues 87–106 (TGQGGVSQPEPPVPEPIPKD) form a disordered region. Active-site residues include histidine 220 and cysteine 270. Residues 275-296 (HGRVWASDGEPDEPIEIEDDDF) constitute a propeptide that is removed on maturation.

The protein belongs to the peptidase C14A family. Heterotetramer that consists of two anti-parallel arranged heterodimers, each one formed by a 20 kDa (p20) and a 10 kDa (p10) subunit. Interacts (via pyrin domain) with pycard (via pyrin domain). Interacts with caspb. Component of NLRP1 inflammasomes. Inflammasomes are supramolecular complexes that assemble in the cytosol in response to pathogens and other damage-associated signals and play critical roles in innate immunity and inflammation. The NLRP1 inflammasome is composed of the signal sensor nlrp1, and the adapter pycard (asc), which recruit effector pro-inflammatory caspases caspa and/or caspb. The interaction between nlrp1 and pycard is required for the sequential recruitment of caspa and then caspb. Caspa is preferentially recruited first and this causes the cleavage of pro-il1b into the midformed il1b. This is followed by the recruitment of caspb, which is activated and cleaves the midformed il1b resulting in il1b maturation. Interacts with caiap. In terms of processing, the two subunits are derived from the precursor sequence by an autocatalytic mechanism.

The protein resides in the inflammasome. It localises to the cytoplasm. The enzyme catalyses Strict requirement for an Asp residue at position P1 and has a preferred cleavage sequence of Tyr-Val-Ala-Asp-|-.. In terms of biological role, thiol protease which cleaves IL-1 beta (il1b), releasing the mature cytokine which is involved in a variety of inflammatory processes, and mediates apoptosis. Component of the NLRP1 inflammasome, which plays a crucial role in innate immunity and inflammation. In response to pathogens and other damage-associated signals, recruited to the NLRP1 inflammasome in its precursor form. Its subsequent activation causes the cleavage of pro-il1b into the midformed il1b, which then evetually leads to il1b maturation and secretion in the extracellular milieu. Required for the development of the cartilaginous pharyngeal skeleton. The polypeptide is Caspase a (Danio rerio (Zebrafish)).